A 771-amino-acid chain; its full sequence is MGRAGTGTGGEAVAAVVAGPLLLLLLARPPPASAGYSGKSEVGLVSEHFSQAPQRLSFYSWYGSARLFRFRVPPDAVLLRWLLQVSRESGAACTDAEITVHFRSGAPPVINPLGTSFPDDTAVQPSFQVGVPLSTTPRSNASVNVSHPAPGDWFVAAHLPPSSQKIELKGLAPTCAYVFQPELLVTRVVEISIMEPDVPLPQTLLSHPSYLKVFVPDYTRELLLELRDCVSNGSLGCPVRLTVGPVTLPSNFQKVLTCTGAPWPCRLLLPSPPWDRWLQVTAESLVGPLGTVAFSAVAALTACRPRSVTIQPLLQSSQNQSFNASSGLLSPSPDHQDLGRSGRVDRSPFCLTNYPVTREDMDVVSVHFQPLDRVSVRVCSDTPSVMRLRLNTGMDSGGSLTISLRANKTEMRNETVVVACVNAASPFLGFNTSLNCTTAFFQGYPLSLSAWSRRANLIIPYPETDNWYLSLQLMCPENAEDCEQAVVHVETTLYLVPCLNDCGPYGQCLLLRRHSYLYASCSCKAGWRGWSCTDNSTAQTVAQQRAATLLLTLSNLMFLAPIAVSVRRFFLVEASVYAYTMFFSTFYHACDQPGEAVLCILSYDTLQYCDFLGSGAAIWVTILCMARLKTVLKYVLFLLGTLVIAMSLQLDRRGMWNMLGPCLFAFVIMASMWAYRCGHRRQCYPTSWQRWAFYLLPGVSMASVGIAIYTSMMTSDNYYYTHSIWHILLAGSAALLLPPPDQPAEPWACSQKFPCHYQICKNDREELYAVT.

A signal peptide spans 1–34 (MGRAGTGTGGEAVAAVVAGPLLLLLLARPPPASA). The Extracellular segment spans residues 35–545 (GYSGKSEVGL…STAQTVAQQR (511 aa)). Asn-144 carries an N-linked (GlcNAc...) asparagine glycan. A disordered region spans residues 322–343 (FNASSGLLSPSPDHQDLGRSGR). The segment covering 334–343 (DHQDLGRSGR) has biased composition (basic and acidic residues). 2 N-linked (GlcNAc...) asparagine glycosylation sites follow: Asn-407 and Asn-431. Positions 497–533 (PCLNDCGPYGQCLLLRRHSYLYASCSCKAGWRGWSCT) constitute an EGF-like domain. 3 cysteine pairs are disulfide-bonded: Cys-498–Cys-508, Cys-502–Cys-521, and Cys-523–Cys-532. The chain crosses the membrane as a helical span at residues 546–566 (AATLLLTLSNLMFLAPIAVSV). Over 567 to 568 (RR) the chain is Cytoplasmic. Residues 569-589 (FFLVEASVYAYTMFFSTFYHA) traverse the membrane as a helical segment. The Extracellular portion of the chain corresponds to 590–605 (CDQPGEAVLCILSYDT). A helical membrane pass occupies residues 606–626 (LQYCDFLGSGAAIWVTILCMA). The Cytoplasmic portion of the chain corresponds to 627–629 (RLK). The helical transmembrane segment at 630-650 (TVLKYVLFLLGTLVIAMSLQL) threads the bilayer. At 651–653 (DRR) the chain is on the extracellular side. A helical transmembrane segment spans residues 654–674 (GMWNMLGPCLFAFVIMASMWA). Over 675–690 (YRCGHRRQCYPTSWQR) the chain is Cytoplasmic. A helical membrane pass occupies residues 691 to 711 (WAFYLLPGVSMASVGIAIYTS). The Extracellular portion of the chain corresponds to 712 to 717 (MMTSDN). The chain crosses the membrane as a helical span at residues 718 to 738 (YYYTHSIWHILLAGSAALLLP). Residues 739–771 (PPDQPAEPWACSQKFPCHYQICKNDREELYAVT) are Cytoplasmic-facing.

The protein belongs to the TMEM8 family. In terms of processing, glycosylated. As to expression, expressed in pancreas, placenta, spleen, liver, kidney, bone marrow, peripheral blood leukocytes and tonsil.

It is found in the cell membrane. It localises to the lysosome membrane. The catalysed reaction is a 1,2-diacyl-sn-glycero-3-phosphocholine + H2O = a 1-acyl-sn-glycero-3-phosphocholine + a fatty acid + H(+). Its function is as follows. Involved in the lipid remodeling steps of GPI-anchor maturation. Lipid remodeling steps consist in the generation of 2 saturated fatty chains at the sn-2 position of GPI-anchor proteins (GPI-AP). Has phospholipase A2 activity that removes an acyl-chain at the sn-2 position of GPI-anchors during the remodeling of GPI. Required for the shedding of the GPI-AP CRIPTO, but not CFC1, at the cell surface. Shedding of CRIPTO modulates Nodal signaling by allowing soluble CRIPTO to act as a Nodal coreceptor on other cells. Also indirectly involved in the translocation of RAC1 from the cytosol to the plasma membrane by maintaining the steady state amount of CAV1-enriched plasma membrane subdomains, stabilizing RAC1 at the plasma membrane. In contrast to myomaker (TMEM8C), has no fusogenic activity. In Homo sapiens (Human), this protein is Post-GPI attachment to proteins factor 6.